A 430-amino-acid polypeptide reads, in one-letter code: Carbamoyl phosphate synthase arginine-specific small chain (430 aa).

Residues 1 to 9 constitute a mitochondrion transit peptide; it reads MLSATKRYL. The 189-residue stretch at 219 to 407 folds into the Glutamine amidotransferase type-1 domain; that stretch reads HIAVLDCGAK…FDNINVYKKS (189 aa). The active-site Nucleophile is the cysteine 296. Catalysis depends on residues histidine 380 and glutamate 382.

This sequence belongs to the CarA family. In terms of assembly, heterodimer composed of 2 chains; the small (or glutamine) chain promotes the hydrolysis of glutamine to ammonia, which is used by the large (or ammonia) chain to synthesize carbamoyl phosphate.

Its subcellular location is the mitochondrion matrix. It catalyses the reaction hydrogencarbonate + L-glutamine + 2 ATP + H2O = carbamoyl phosphate + L-glutamate + 2 ADP + phosphate + 2 H(+). The catalysed reaction is L-glutamine + H2O = L-glutamate + NH4(+). It participates in amino-acid biosynthesis; L-arginine biosynthesis; carbamoyl phosphate from bicarbonate: step 1/1. In terms of biological role, small subunit of the arginine-specific carbamoyl phosphate synthase (CPSase). CPSase catalyzes the formation of carbamoyl phosphate from the ammonia moiety of glutamine, carbonate, and phosphate donated by ATP, the first step of the arginine biosynthetic pathway. The small subunit (glutamine amidotransferase) binds and cleaves glutamine to supply the large subunit with the substrate ammonia. The sequence is that of Carbamoyl phosphate synthase arginine-specific small chain (CPA1) from Candida albicans (strain SC5314 / ATCC MYA-2876) (Yeast).